Reading from the N-terminus, the 1040-residue chain is FHF complex subunit HOOK-interacting protein 1A (1040 aa).

Disordered regions lie at residues 555–613 (PQQL…PIDP), 653–746 (SEDM…AAHP), and 769–808 (LMEQNYPTPDPLLLTKEEEGKEESKGEKEKEGKKELEDEE). A compositionally biased stretch (basic and acidic residues) spans 653–664 (SEDMKDSQEEAA). Residues 677–690 (VPINNGPLLSTQPE) show a composition bias toward polar residues. Basic and acidic residues-rich tracts occupy residues 696 to 719 (EWNRDNSDPFHSEPKEPKQEREPE) and 783 to 804 (TKEEEGKEESKGEKEKEGKKEL).

It belongs to the FHIP family. May be a component of the FTS/Hook/FHIP complex (FHF complex), composed of AKTIP/FTS, FHIP1B, and one or more members of the Hook family of proteins HOOK1, HOOK2, and HOOK3. May interact directly with AKTIP/FTS.

In terms of biological role, probable component of the FTS/Hook/FHIP complex (FHF complex). FHF complex promotes the distribution of AP-4 complex to the perinuclear area of the cell. This Homo sapiens (Human) protein is FHF complex subunit HOOK-interacting protein 1A.